The primary structure comprises 161 residues: 3-hydroxyacyl-[acyl-carrier-protein] dehydratase FabZ (161 aa).

The active site involves histidine 55.

This sequence belongs to the thioester dehydratase family. FabZ subfamily.

The protein resides in the cytoplasm. It catalyses the reaction a (3R)-hydroxyacyl-[ACP] = a (2E)-enoyl-[ACP] + H2O. Functionally, involved in unsaturated fatty acids biosynthesis. Catalyzes the dehydration of short chain beta-hydroxyacyl-ACPs and long chain saturated and unsaturated beta-hydroxyacyl-ACPs. The chain is 3-hydroxyacyl-[acyl-carrier-protein] dehydratase FabZ from Jannaschia sp. (strain CCS1).